Consider the following 271-residue polypeptide: Regulatory protein RecX (271 aa).

This sequence belongs to the RecX family.

It localises to the cytoplasm. Functionally, modulates RecA activity. This Lactobacillus delbrueckii subsp. bulgaricus (strain ATCC BAA-365 / Lb-18) protein is Regulatory protein RecX.